Reading from the N-terminus, the 166-residue chain is C-signal (166 aa).

In terms of processing, the mature C-signal (p17) is derived from the precursor sequence (p25) by proteolytic cleavage. The subtilisin-like protease PopC is directly responsible for cleavage of p25 to p17. The cleavage site is probably located between amino acid residues 60 and 68 in p25.

The protein resides in the secreted. Its subcellular location is the cell outer membrane. Synthesized as a precursor protein (p25), which is cleaved after secretion to generate the mature active C-signal (p17). The p25 precursor purified from M.xanthus cells does not display C-signal activity. Cell-cell signaling protein required for fruiting body formation, a multicellular developmental program that is induced in response to starvation. Necessary for rippling, cellular aggregation, spore differentiation and for gene expression that is initiated after 6 hours of starvation. In starving cells, the C-signal directly induces aggregation and sporulation, which are induced at distinct threshold levels of C-signaling. Contact with C-signaling induces cells to glide with high speed and low stop and reversal frequencies toward aggregation centers. The C-signal acts as a morphogen and induces distinct events at distinct threshold levels. A regulated increase in the level of C-signaling during development ensures the correct temporal order of aggregation and sporulation. This is C-signal from Myxococcus xanthus.